The following is a 716-amino-acid chain: Fatty acid oxidation complex subunit alpha (716 aa).

Positions 1–189 are enoyl-CoA hydratase/isomerase; sequence MIYQSPTIQV…KVGAVDAVVA (189 aa). D296 lines the substrate pocket. The tract at residues 311–716 is 3-hydroxyacyl-CoA dehydrogenase; sequence KEVNNAAVLG…AANNGSYYQA (406 aa). Residues M324, D343, 400–402, K407, and S429 each bind NAD(+); that span reads VVE. Catalysis depends on H450, which acts as the For 3-hydroxyacyl-CoA dehydrogenase activity. N453 is a binding site for NAD(+). Substrate contacts are provided by N500 and Y660.

The protein in the N-terminal section; belongs to the enoyl-CoA hydratase/isomerase family. In the C-terminal section; belongs to the 3-hydroxyacyl-CoA dehydrogenase family. In terms of assembly, heterotetramer of two alpha chains (FadB) and two beta chains (FadA).

It carries out the reaction a (3S)-3-hydroxyacyl-CoA + NAD(+) = a 3-oxoacyl-CoA + NADH + H(+). The enzyme catalyses a (3S)-3-hydroxyacyl-CoA = a (2E)-enoyl-CoA + H2O. The catalysed reaction is a 4-saturated-(3S)-3-hydroxyacyl-CoA = a (3E)-enoyl-CoA + H2O. It catalyses the reaction (3S)-3-hydroxybutanoyl-CoA = (3R)-3-hydroxybutanoyl-CoA. It carries out the reaction a (3Z)-enoyl-CoA = a 4-saturated (2E)-enoyl-CoA. The enzyme catalyses a (3E)-enoyl-CoA = a 4-saturated (2E)-enoyl-CoA. The protein operates within lipid metabolism; fatty acid beta-oxidation. Involved in the aerobic and anaerobic degradation of long-chain fatty acids via beta-oxidation cycle. Catalyzes the formation of 3-oxoacyl-CoA from enoyl-CoA via L-3-hydroxyacyl-CoA. It can also use D-3-hydroxyacyl-CoA and cis-3-enoyl-CoA as substrate. This is Fatty acid oxidation complex subunit alpha from Shewanella baltica (strain OS223).